Here is a 191-residue protein sequence, read N- to C-terminus: Sec-independent protein translocase protein TatB (191 aa).

Residues 1–21 (MFDIGFSELFLILVIGLLVLG) form a helical membrane-spanning segment. Positions 119-138 (ESTSQTLTEQLTPSEQVTEA) are enriched in polar residues. Disordered stretches follow at residues 119-139 (ESTS…TEAT) and 168-191 (DDDD…DKKA). Residues 181 to 191 (PQTEEIQDKKA) show a composition bias toward basic and acidic residues.

It belongs to the TatB family. The Tat system comprises two distinct complexes: a TatABC complex, containing multiple copies of TatA, TatB and TatC subunits, and a separate TatA complex, containing only TatA subunits. Substrates initially bind to the TatABC complex, which probably triggers association of the separate TatA complex to form the active translocon.

Its subcellular location is the cell inner membrane. Part of the twin-arginine translocation (Tat) system that transports large folded proteins containing a characteristic twin-arginine motif in their signal peptide across membranes. Together with TatC, TatB is part of a receptor directly interacting with Tat signal peptides. TatB may form an oligomeric binding site that transiently accommodates folded Tat precursor proteins before their translocation. This is Sec-independent protein translocase protein TatB from Pasteurella multocida (strain Pm70).